The chain runs to 267 residues: MSRISDRFASLKERGEKALVTFVTAGDPDLATTEKVVLELERAGADLVELGVPFSDPMADGPTIQLSSDRALASGTTLPAILELVSRLREKTQVPIVLMGYFNPIFAYGSERFAFDAAQAGVDALLVVDLPPEEAAELKGATDSCGLDLIFLLTPTSDSSRVAMVARQGSGFIYYVSVTGVTGARSAVADDLAARVTEVRGALELPLVVGFGISTPEQAGEVAQAADGVVVGSALVKYFEKYQGAELLEQLGGFVSALKQGVLKGSR.

Residues Glu49 and Asp60 each act as proton acceptor in the active site.

It belongs to the TrpA family. In terms of assembly, tetramer of two alpha and two beta chains.

It catalyses the reaction (1S,2R)-1-C-(indol-3-yl)glycerol 3-phosphate + L-serine = D-glyceraldehyde 3-phosphate + L-tryptophan + H2O. It functions in the pathway amino-acid biosynthesis; L-tryptophan biosynthesis; L-tryptophan from chorismate: step 5/5. Its function is as follows. The alpha subunit is responsible for the aldol cleavage of indoleglycerol phosphate to indole and glyceraldehyde 3-phosphate. This chain is Tryptophan synthase alpha chain, found in Geobacter sp. (strain M21).